A 43-amino-acid chain; its full sequence is uncharacterized protein (43 aa).

The N-terminal stretch at 1–16 (MKLLNFILIIFNALKS) is a signal peptide. N37 carries an N-linked (GlcNAc...) asparagine; by host glycan.

This is an uncharacterized protein from Acheta domesticus (House cricket).